The primary structure comprises 315 residues: Acetaldehyde dehydrogenase (315 aa).

13-16 (SGNI) contributes to the NAD(+) binding site. Cysteine 131 serves as the catalytic Acyl-thioester intermediate. NAD(+)-binding positions include 163–171 (SAGPGTRAN) and asparagine 290.

Belongs to the acetaldehyde dehydrogenase family.

The enzyme catalyses acetaldehyde + NAD(+) + CoA = acetyl-CoA + NADH + H(+). In Xanthobacter autotrophicus (strain ATCC BAA-1158 / Py2), this protein is Acetaldehyde dehydrogenase.